Consider the following 368-residue polypeptide: 1-deoxy-D-xylulose 5-phosphate reductoisomerase (368 aa).

The NADPH site is built by T7, G8, S9, I10, G31, K32, N33, and N113. K114 serves as a coordination point for 1-deoxy-D-xylulose 5-phosphate. NADPH is bound at residue E115. D133 is a Mn(2+) binding site. S134, E135, S158, and H181 together coordinate 1-deoxy-D-xylulose 5-phosphate. Residue E135 participates in Mn(2+) binding. G187 is a binding site for NADPH. Residues S194, N199, K200, and E203 each coordinate 1-deoxy-D-xylulose 5-phosphate. Position 203 (E203) interacts with Mn(2+).

Belongs to the DXR family. The cofactor is Mg(2+). Mn(2+) is required as a cofactor.

The enzyme catalyses 2-C-methyl-D-erythritol 4-phosphate + NADP(+) = 1-deoxy-D-xylulose 5-phosphate + NADPH + H(+). The protein operates within isoprenoid biosynthesis; isopentenyl diphosphate biosynthesis via DXP pathway; isopentenyl diphosphate from 1-deoxy-D-xylulose 5-phosphate: step 1/6. Functionally, catalyzes the NADPH-dependent rearrangement and reduction of 1-deoxy-D-xylulose-5-phosphate (DXP) to 2-C-methyl-D-erythritol 4-phosphate (MEP). This Helicobacter pylori (strain HPAG1) protein is 1-deoxy-D-xylulose 5-phosphate reductoisomerase.